The primary structure comprises 148 residues: Large ribosomal subunit protein bL27m (148 aa).

Residues 1 to 30 (MAAAALTLRTRAAVTALLSPTAPTALAVRH) constitute a mitochondrion transit peptide. A disordered region spans residues 28-48 (VRHASKKTGGSSKNLGGKSRG).

Belongs to the bacterial ribosomal protein bL27 family. In terms of assembly, component of the mitochondrial ribosome large subunit (39S) which comprises a 16S rRNA and about 50 distinct proteins.

The protein localises to the mitochondrion. The protein is Large ribosomal subunit protein bL27m (Mrpl27) of Mus musculus (Mouse).